The primary structure comprises 253 residues: uncharacterized protein (253 aa).

The first 16 residues, 1 to 16 (MCVVYRTSVLILLASG), serve as a signal peptide directing secretion. Residue Cys-17 is the site of N-palmitoyl cysteine attachment. Cys-17 is lipidated: S-diacylglycerol cysteine.

This sequence belongs to the staphylococcal tandem lipoprotein family.

Its subcellular location is the cell membrane. This is an uncharacterized protein from Staphylococcus aureus (strain N315).